Here is a 273-residue protein sequence, read N- to C-terminus: Putative pyruvate, phosphate dikinase regulatory protein (273 aa).

153–160 contacts ADP; the sequence is GISRTSKT.

This sequence belongs to the pyruvate, phosphate/water dikinase regulatory protein family. PDRP subfamily.

The catalysed reaction is N(tele)-phospho-L-histidyl/L-threonyl-[pyruvate, phosphate dikinase] + ADP = N(tele)-phospho-L-histidyl/O-phospho-L-threonyl-[pyruvate, phosphate dikinase] + AMP + H(+). It catalyses the reaction N(tele)-phospho-L-histidyl/O-phospho-L-threonyl-[pyruvate, phosphate dikinase] + phosphate + H(+) = N(tele)-phospho-L-histidyl/L-threonyl-[pyruvate, phosphate dikinase] + diphosphate. In terms of biological role, bifunctional serine/threonine kinase and phosphorylase involved in the regulation of the pyruvate, phosphate dikinase (PPDK) by catalyzing its phosphorylation/dephosphorylation. In Rhizobium etli (strain CIAT 652), this protein is Putative pyruvate, phosphate dikinase regulatory protein.